Here is a 973-residue protein sequence, read N- to C-terminus: UvrABC system protein A (973 aa).

34-41 (GLSGSGKS) lines the ATP pocket. ABC transporter domains are found at residues 330–609 (WAKS…PNSI) and 629–958 (AKKN…QFLK). ATP is bound at residue 662 to 669 (GVSGGGKS). The C4-type zinc-finger motif lies at 761–787 (CEACQGDGVIKIEMHFLPDVYVTCDVC).

It belongs to the ABC transporter superfamily. UvrA family. In terms of assembly, forms a heterotetramer with UvrB during the search for lesions.

It is found in the cytoplasm. Functionally, the UvrABC repair system catalyzes the recognition and processing of DNA lesions. UvrA is an ATPase and a DNA-binding protein. A damage recognition complex composed of 2 UvrA and 2 UvrB subunits scans DNA for abnormalities. When the presence of a lesion has been verified by UvrB, the UvrA molecules dissociate. The chain is UvrABC system protein A from Mesorhizobium japonicum (strain LMG 29417 / CECT 9101 / MAFF 303099) (Mesorhizobium loti (strain MAFF 303099)).